The following is a 674-amino-acid chain: Membrane-anchored lipid-binding protein LAM5 (674 aa).

Disordered stretches follow at residues 1-52 (MSDV…LNTE) and 65-151 (NQSA…GSPL). The Cytoplasmic segment spans residues 1–633 (MSDVDNWEPV…AEQQGLKVTM (633 aa)). The span at 69–81 (ADEHPTEIKHDQS) shows a compositional bias: basic and acidic residues. The segment covering 82-119 (RTSSTSSFFSGMISSFKSNVPSPVSRSTTPTSPVSQPS) has biased composition (low complexity). Residue T110 is modified to Phosphothreonine. Residues S113 and S140 each carry the phosphoserine modification. A Phosphothreonine modification is found at T143. Position 149 is a phosphoserine (S149). Residues 198–264 (KDFHETFKSV…FEDVTFMEKT (67 aa)) form the GRAM domain. A compositionally biased stretch (acidic residues) spans 336 to 357 (IDEENNDKDANDNDTNENDDEN). The disordered stretch occupies residues 336 to 380 (IDEENNDKDANDNDTNENDDENISTNETTPNSTSSSPDKEKEKAY). Residues 358–371 (ISTNETTPNSTSSS) show a composition bias toward low complexity. The VASt domain occupies 409 to 582 (NEFVLKELPF…ILSKFIKNNV (174 aa)). A helical transmembrane segment spans residues 634 to 654 (ETWLFLYLIVVVLLLFNLFYI). At 655–674 (RSIAVSLHQLVKLQLVELKL) the chain is on the lumenal side.

Belongs to the YSP2 family.

The protein resides in the endoplasmic reticulum membrane. In terms of biological role, may be involved in sterol transfer between intracellular membranes. The chain is Membrane-anchored lipid-binding protein LAM5 from Saccharomyces cerevisiae (strain ATCC 204508 / S288c) (Baker's yeast).